Consider the following 392-residue polypeptide: Odorant receptor 85f (392 aa).

Residues 1 to 36 (MEPVQYSYEDFARLPTTVFWIMGYDMLGVPKTRSRR) lie on the Cytoplasmic side of the membrane. Residues 37 to 57 (ILYWIYRFLCLASHGVCVGVM) traverse the membrane as a helical segment. The Extracellular portion of the chain corresponds to 58 to 69 (VFRMVEAKTIDN). N-linked (GlcNAc...) asparagine glycosylation is present at asparagine 69. The helical transmembrane segment at 70–90 (VSLIMRYATLVTYIINSDTKF) threads the bilayer. At 91–130 (ATVLQRSAIQSLNSKLAELYPKTTLDRIYHRVNDHYWTKS) the chain is on the cytoplasmic side. The helical transmembrane segment at 131 to 151 (FVYLVIIYIGSSIMVVIGPII) threads the bilayer. Residues 152 to 179 (TSIIAYFTHNVFTYMHCYPYFLYDPEKD) are Extracellular-facing. Residues 180 to 200 (PVWIYISIYALEWLHSTQMVI) form a helical membrane-spanning segment. Over 201–268 (SNIGADIWLL…NDLNGIFGKS (68 aa)) the chain is Cytoplasmic. Residues 269 to 289 (LLLSLLTTAAVICTVAVYTLI) form a helical membrane-spanning segment. Residues 290–295 (QGPTLE) are Extracellular-facing. A helical membrane pass occupies residues 296–316 (GFTYVIFIGTSVMQVYLVCYY). Topologically, residues 317–363 (GQQVLDLSGEVAHAVYNHDFHDASIAYKRYLLIIIIRAQQPVELNAM) are cytoplasmic. The chain crosses the membrane as a helical span at residues 364–384 (GYLSISLDTFKQLMSVSYRVI). At 385-392 (TMLMQMIQ) the chain is on the extracellular side.

This sequence belongs to the insect chemoreceptor superfamily. Heteromeric odorant receptor channel (TC 1.A.69) family. Or49a subfamily. In terms of assembly, interacts with Orco. Complexes exist early in the endomembrane system in olfactory sensory neurons (OSNs), coupling these complexes to the conserved ciliary trafficking pathway. Expressed in olfactory sensory neurons in the antenna.

Its subcellular location is the cell membrane. Odorant receptor which mediates acceptance or avoidance behavior, depending on its substrates. The odorant receptor repertoire encodes a large collection of odor stimuli that vary widely in identity, intensity, and duration. May form a complex with Orco to form odorant-sensing units, providing sensitive and prolonged odorant signaling and calcium permeability. This Drosophila melanogaster (Fruit fly) protein is Odorant receptor 85f (Or85f).